Consider the following 605-residue polypeptide: MMIDMFTGLKRSHRGGDLRIDHAGQTVTLMGWVQRRRDHGGLIFVDLRDRSGLVQVVFSPEVGKEAFTKAEDVRNEYVLAVTGDVRPRPEGTVNANLPSGQIDVYARQLWVLNSAKTPPFYIEDGVDVDETVRLKYRYLDLRRPEMQRNLIIRHKTAKAMRDFLDRNGFLEIETPMLTKSTPEGAREFMVPSRIHPGEFFVLPQSPQLYKQILMVAGMERYFQIVRCFRDEDLRADRQPEFTQLDIEMSFTQMDDLLTLMEEMVAHIFKEALGKEISTPFRRIPYAEAMGRFGSDKPDLRFGLELIDLTETVKDVEFKVFASVVKGGGEVKAINAKGCAHFSRKEIDDLTKGVAVYGAKGLAYIQMTEEGPKSPIAKFFTDEQLNAVLDRLGAEKGDLLLFVADKPSVVAASLGFLRQELARRLNLIDSEKLEFAWVVDFPLVEYDPEEKRYNAIHHPFTAPKDEDLDLLDKEPGKVRAKAYDLVLNGVELGGGSLRIYRRDIQEKMFAILGLTAEEAYQKFGFLLDAFDYGTPPHGGIAFGLDRMIMLMTGRDTIRDVIAFPKTQSASDMMVDAPSAVTPRQLKELHIKLDLPVKAPKAEPAKK.

An L-aspartate-binding site is contributed by Glu-183. Residues 207-210 (QLYK) form an aspartate region. Arg-229 provides a ligand contact to L-aspartate. ATP is bound by residues 229-231 (RDE) and Gln-238. His-456 lines the L-aspartate pocket. Glu-490 lines the ATP pocket. Residue Arg-497 coordinates L-aspartate. 542-545 (GLDR) provides a ligand contact to ATP.

The protein belongs to the class-II aminoacyl-tRNA synthetase family. Type 1 subfamily. As to quaternary structure, homodimer.

The protein localises to the cytoplasm. It catalyses the reaction tRNA(Asx) + L-aspartate + ATP = L-aspartyl-tRNA(Asx) + AMP + diphosphate. Its function is as follows. Aspartyl-tRNA synthetase with relaxed tRNA specificity since it is able to aspartylate not only its cognate tRNA(Asp) but also tRNA(Asn). Reaction proceeds in two steps: L-aspartate is first activated by ATP to form Asp-AMP and then transferred to the acceptor end of tRNA(Asp/Asn). This chain is Aspartate--tRNA(Asp/Asn) ligase, found in Heliobacterium modesticaldum (strain ATCC 51547 / Ice1).